The sequence spans 549 residues: Glucose-6-phosphate isomerase (549 aa).

An N6-acetyllysine mark is found at Lys80, Lys228, and Lys234. Residue Glu355 is the Proton donor of the active site. Active-site residues include His386 and Lys514.

It belongs to the GPI family.

The protein localises to the cytoplasm. It carries out the reaction alpha-D-glucose 6-phosphate = beta-D-fructose 6-phosphate. The protein operates within carbohydrate biosynthesis; gluconeogenesis. Its pathway is carbohydrate degradation; glycolysis; D-glyceraldehyde 3-phosphate and glycerone phosphate from D-glucose: step 2/4. Catalyzes the reversible isomerization of glucose-6-phosphate to fructose-6-phosphate. The sequence is that of Glucose-6-phosphate isomerase from Escherichia coli O17:K52:H18 (strain UMN026 / ExPEC).